A 386-amino-acid chain; its full sequence is Homoserine O-succinyltransferase (386 aa).

An AB hydrolase-1 domain is found at asparagine 49–leucine 358. Residue serine 156 is the Nucleophile of the active site. Arginine 226 is a binding site for substrate. Catalysis depends on residues aspartate 321 and histidine 354. Aspartate 355 contacts substrate.

This sequence belongs to the AB hydrolase superfamily. MetX family. Homodimer.

It localises to the cytoplasm. It carries out the reaction L-homoserine + succinyl-CoA = O-succinyl-L-homoserine + CoA. Its pathway is amino-acid biosynthesis; L-methionine biosynthesis via de novo pathway; O-succinyl-L-homoserine from L-homoserine: step 1/1. Its function is as follows. Transfers a succinyl group from succinyl-CoA to L-homoserine, forming succinyl-L-homoserine. The protein is Homoserine O-succinyltransferase of Acinetobacter baumannii (strain AB307-0294).